The chain runs to 654 residues: uncharacterized protein (654 aa).

Residues M1–T13 show a composition bias toward polar residues. The tract at residues M1–R23 is disordered. Residues C25–C54 constitute a DNA-binding region (zn(2)-C6 fungal-type). Positions R63–L96 are disordered.

The protein resides in the cytoplasm. Its subcellular location is the nucleus. This is an uncharacterized protein from Schizosaccharomyces pombe (strain 972 / ATCC 24843) (Fission yeast).